Reading from the N-terminus, the 85-residue chain is Phosphocarrier protein HPr (85 aa).

Positions 1–85 constitute an HPr domain; it reads MFQKEIKINA…HLSKIMTELE (85 aa). The active-site Pros-phosphohistidine intermediate is H15.

It belongs to the HPr family.

The protein resides in the cytoplasm. Functionally, general (non sugar-specific) component of the phosphoenolpyruvate-dependent sugar phosphotransferase system (sugar PTS). This major carbohydrate active-transport system catalyzes the phosphorylation of incoming sugar substrates concomitantly with their translocation across the cell membrane. The phosphoryl group from phosphoenolpyruvate (PEP) is transferred to the phosphoryl carrier protein HPr by enzyme I. Phospho-HPr then transfers it to the PTS EIIA domain. The sequence is that of Phosphocarrier protein HPr (ptsH) from Buchnera aphidicola subsp. Schizaphis graminum (strain Sg).